The primary structure comprises 334 residues: Biotin synthase (334 aa).

A Radical SAM core domain is found at 48–275; the sequence is NQVQTSQLLS…RSMVRLSAGR (228 aa). Positions 63, 67, and 70 each coordinate [4Fe-4S] cluster. Residues cysteine 107, cysteine 138, cysteine 198, and arginine 270 each coordinate [2Fe-2S] cluster.

The protein belongs to the radical SAM superfamily. Biotin synthase family. In terms of assembly, homodimer. Requires [4Fe-4S] cluster as cofactor. It depends on [2Fe-2S] cluster as a cofactor.

It carries out the reaction (4R,5S)-dethiobiotin + (sulfur carrier)-SH + 2 reduced [2Fe-2S]-[ferredoxin] + 2 S-adenosyl-L-methionine = (sulfur carrier)-H + biotin + 2 5'-deoxyadenosine + 2 L-methionine + 2 oxidized [2Fe-2S]-[ferredoxin]. The protein operates within cofactor biosynthesis; biotin biosynthesis; biotin from 7,8-diaminononanoate: step 2/2. In terms of biological role, catalyzes the conversion of dethiobiotin (DTB) to biotin by the insertion of a sulfur atom into dethiobiotin via a radical-based mechanism. This is Biotin synthase from Maricaulis maris (strain MCS10) (Caulobacter maris).